The chain runs to 307 residues: Agmatinase (307 aa).

Mn(2+) is bound by residues H126, D149, H151, D153, D230, and D232.

It belongs to the arginase family. Agmatinase subfamily. The cofactor is Mn(2+).

The catalysed reaction is agmatine + H2O = urea + putrescine. The protein operates within amine and polyamine biosynthesis; putrescine biosynthesis via agmatine pathway; putrescine from agmatine: step 1/1. Catalyzes the formation of putrescine from agmatine. The protein is Agmatinase of Sodalis glossinidius (strain morsitans).